The sequence spans 222 residues: Riboflavin kinase (222 aa).

The segment at 1–94 (METIDAEDAA…AKIFDVKDEQ (94 aa)) is H-T-H motif-like. Positions 95-222 (YVLTGTVMSG…ENSEVVVVIG (128 aa)) are riboflavin kinase. 104–109 (GVGEGR) contacts CDP. 2 residues coordinate Mg(2+): threonine 133 and asparagine 135. Positions 190 and 198 each coordinate FMN. 203–206 (TQLR) lines the CDP pocket.

Belongs to the archaeal riboflavin kinase family. It depends on Mg(2+) as a cofactor.

The enzyme catalyses riboflavin + CTP = CDP + FMN + H(+). It participates in cofactor biosynthesis; FMN biosynthesis; FMN from riboflavin (CTP route): step 1/1. Catalyzes the CTP-dependent phosphorylation of riboflavin (vitamin B2) to form flavin mononucleotide (FMN). The sequence is that of Riboflavin kinase (ribK) from Methanocorpusculum labreanum (strain ATCC 43576 / DSM 4855 / Z).